Consider the following 375-residue polypeptide: Homoserine O-succinyltransferase (375 aa).

Residues 48–358 (NAVLVCHALS…PAGHDSFLLD (311 aa)) form the AB hydrolase-1 domain. The active-site Nucleophile is serine 154. Arginine 224 lines the substrate pocket. Catalysis depends on residues aspartate 319 and histidine 352. Position 353 (aspartate 353) interacts with substrate.

It belongs to the AB hydrolase superfamily. MetX family. As to quaternary structure, homodimer.

Its subcellular location is the cytoplasm. The enzyme catalyses L-homoserine + succinyl-CoA = O-succinyl-L-homoserine + CoA. Its pathway is amino-acid biosynthesis; L-methionine biosynthesis via de novo pathway; O-succinyl-L-homoserine from L-homoserine: step 1/1. Its function is as follows. Transfers a succinyl group from succinyl-CoA to L-homoserine, forming succinyl-L-homoserine. The sequence is that of Homoserine O-succinyltransferase from Azoarcus sp. (strain BH72).